Here is a 193-residue protein sequence, read N- to C-terminus: MTDEEEAEKHYHSGLPGILGTIDTLISKLEAIILALGVLLMATNTVANVIGRFALGESLFFTGEVNRILIIMITFAGIGYAARHGRHIRMSAIYDALPVGGRRALMIVISLFTSLVMFFLMYYSVHYVLDLYDKGRILPALGFPIFIIYVWVPLGFLITGIQYLFTAIKNLTSRDVYLSTSVVDGYKDTETEV.

The next 4 helical transmembrane spans lie at 33–55 (ILAL…RFAL), 65–82 (VNRI…GYAA), 103–125 (RALM…YYSV), and 145–167 (IFII…LFTA).

Belongs to the TRAP transporter small permease family. As to quaternary structure, the complex comprises the extracytoplasmic solute receptor protein TeaA, and the two transmembrane proteins TeaB and TeaC.

It is found in the cell inner membrane. Its function is as follows. Part of the tripartite ATP-independent periplasmic (TRAP) transport system TeaABC involved in the uptake of ectoine and hydroxyectoine in response to osmotic upshock. Probably functions as a recovery system for synthesized ectoine that leaks out of the cell. This chain is Ectoine TRAP transporter small permease protein TeaB (teaB), found in Halomonas elongata (strain ATCC 33173 / DSM 2581 / NBRC 15536 / NCIMB 2198 / 1H9).